A 345-amino-acid polypeptide reads, in one-letter code: Sulfate/thiosulfate import ATP-binding protein CysA (345 aa).

The ABC transporter domain occupies 3 to 237; sequence IQVSGLCKHF…PRTEFVYQFV (235 aa). Residue 35–42 participates in ATP binding; it reads GPSGCGKT.

It belongs to the ABC transporter superfamily. Sulfate/tungstate importer (TC 3.A.1.6) family. As to quaternary structure, the complex is composed of two ATP-binding proteins (CysA), two transmembrane proteins (CysT and CysW) and a solute-binding protein (CysP).

It localises to the cell inner membrane. It catalyses the reaction sulfate(out) + ATP + H2O = sulfate(in) + ADP + phosphate + H(+). It carries out the reaction thiosulfate(out) + ATP + H2O = thiosulfate(in) + ADP + phosphate + H(+). Functionally, part of the ABC transporter complex CysAWTP involved in sulfate/thiosulfate import. Responsible for energy coupling to the transport system. This chain is Sulfate/thiosulfate import ATP-binding protein CysA, found in Vibrio vulnificus (strain CMCP6).